We begin with the raw amino-acid sequence, 203 residues long: Small ribosomal subunit protein uS4 (203 aa).

Residues 93–154 enclose the S4 RNA-binding domain; the sequence is RRFDNVVFRA…KSKNMDAVTE (62 aa).

Belongs to the universal ribosomal protein uS4 family. As to quaternary structure, part of the 30S ribosomal subunit. Contacts protein S5. The interaction surface between S4 and S5 is involved in control of translational fidelity.

Functionally, one of the primary rRNA binding proteins, it binds directly to 16S rRNA where it nucleates assembly of the body of the 30S subunit. With S5 and S12 plays an important role in translational accuracy. This chain is Small ribosomal subunit protein uS4, found in Prosthecochloris aestuarii (strain DSM 271 / SK 413).